The sequence spans 291 residues: Pantothenate synthetase (291 aa).

Met30–His37 serves as a coordination point for ATP. The Proton donor role is filled by His37. Residue Gln61 participates in (R)-pantoate binding. Gln61 is a binding site for beta-alanine. An ATP-binding site is contributed by Gly149 to Asp152. Gln155 serves as a coordination point for (R)-pantoate. Residues Val178 and Met186–Arg189 contribute to the ATP site.

It belongs to the pantothenate synthetase family. Homodimer.

The protein localises to the cytoplasm. The enzyme catalyses (R)-pantoate + beta-alanine + ATP = (R)-pantothenate + AMP + diphosphate + H(+). It participates in cofactor biosynthesis; (R)-pantothenate biosynthesis; (R)-pantothenate from (R)-pantoate and beta-alanine: step 1/1. Functionally, catalyzes the condensation of pantoate with beta-alanine in an ATP-dependent reaction via a pantoyl-adenylate intermediate. The protein is Pantothenate synthetase of Aliivibrio fischeri (strain ATCC 700601 / ES114) (Vibrio fischeri).